Reading from the N-terminus, the 147-residue chain is Putative acetyltransferase BSU40680 (147 aa).

In terms of domain architecture, N-acetyltransferase spans 1-144 (MNVKKITSEQ…PHVLMTKQDD (144 aa)). Residues 74–76 (ICI) and 115–117 (GFY) each bind CoA.

The protein belongs to the UPF0039 (ElaA) family.

Could catalyze the transfer of an acetyl group from acetyl coenzyme A (AcCoA) to an acceptor substrate and release both CoA and the acetylated product. This Bacillus subtilis (strain 168) protein is Putative acetyltransferase BSU40680 (yybD).